We begin with the raw amino-acid sequence, 104 residues long: MKFAVIDRKNFTLIHFEIEKPIKPEILKEIEIPSVDTRKGVVISGRGPIWLHCFLAHKYHHTPFVAVYDPRLGAVVVQSHSELREGDVIDVVVEEILKGGVRHV.

To A.aeolicus AQ_377.

This is an uncharacterized protein from Archaeoglobus fulgidus (strain ATCC 49558 / DSM 4304 / JCM 9628 / NBRC 100126 / VC-16).